Here is a 157-residue protein sequence, read N- to C-terminus: Large ribosomal subunit protein eL24 (157 aa).

The segment at 95 to 157 is disordered; the sequence is NQKPEVRKAQ…VSAPRVGGKR (63 aa). Residues 96–117 are compositionally biased toward basic and acidic residues; sequence QKPEVRKAQREQAIRAAKEAKK. Over residues 123-145 the composition is skewed to low complexity; sequence KKQTTQSSKAPAKSAQKQKIAKP.

This sequence belongs to the eukaryotic ribosomal protein eL24 family. As to quaternary structure, component of the large ribosomal subunit.

It localises to the cytoplasm. Component of the large ribosomal subunit. The ribosome is a large ribonucleoprotein complex responsible for the synthesis of proteins in the cell. Plays an essential role in early embryonic development. This Danio rerio (Zebrafish) protein is Large ribosomal subunit protein eL24 (rpl24).